The sequence spans 319 residues: Beta-ketoacyl-[acyl-carrier-protein] synthase III (319 aa).

Active-site residues include Cys115 and His246. The segment at 247–251 is ACP-binding; it reads QANLR. Asn276 is an active-site residue.

It belongs to the thiolase-like superfamily. FabH family. In terms of assembly, homodimer.

It localises to the cytoplasm. It carries out the reaction malonyl-[ACP] + acetyl-CoA + H(+) = 3-oxobutanoyl-[ACP] + CO2 + CoA. The protein operates within lipid metabolism; fatty acid biosynthesis. Its function is as follows. Catalyzes the condensation reaction of fatty acid synthesis by the addition to an acyl acceptor of two carbons from malonyl-ACP. Catalyzes the first condensation reaction which initiates fatty acid synthesis and may therefore play a role in governing the total rate of fatty acid production. Possesses both acetoacetyl-ACP synthase and acetyl transacylase activities. Its substrate specificity determines the biosynthesis of branched-chain and/or straight-chain of fatty acids. The polypeptide is Beta-ketoacyl-[acyl-carrier-protein] synthase III (Coxiella burnetii (strain RSA 493 / Nine Mile phase I)).